The sequence spans 207 residues: U1 small nuclear ribonucleoprotein C (207 aa).

A Matrin-type zinc finger spans residues 4 to 36 (YYCDYCDTYLTHDSPSVRKQHNAGYKHKANVRI). Pro residues-rich tracts occupy residues 105 to 115 (PPQGYMPPPGV) and 122 to 131 (PGAPLPPPPQ). Positions 105 to 207 (PPQGYMPPPG…PSAESPESNE (103 aa)) are disordered. Residues 132 to 144 (NGILRPPGMAPIP) show a composition bias toward low complexity. Over residues 162–183 (GPPPNYNGLPPPPPYHTNPAAP) the composition is skewed to pro residues. Residues 184-207 (PSGNFNNPNLNNPNPSAESPESNE) are compositionally biased toward low complexity.

The protein belongs to the U1 small nuclear ribonucleoprotein C family. As to quaternary structure, U1 snRNP is composed of the 7 core Sm proteins B/B', D1, D2, D3, E, F and G that assemble in a heptameric protein ring on the Sm site of the small nuclear RNA to form the core snRNP, and at least 3 U1 snRNP-specific proteins U1-70K, U1-A and U1-C. U1-C interacts with U1 snRNA and the 5' splice-site region of the pre-mRNA.

The protein localises to the nucleus. Functionally, component of the spliceosomal U1 snRNP, which is essential for recognition of the pre-mRNA 5' splice-site and the subsequent assembly of the spliceosome. U1-C is directly involved in initial 5' splice-site recognition for both constitutive and regulated alternative splicing. The interaction with the 5' splice-site seems to precede base-pairing between the pre-mRNA and the U1 snRNA. Stimulates commitment or early (E) complex formation by stabilizing the base pairing of the 5' end of the U1 snRNA and the 5' splice-site region. The protein is U1 small nuclear ribonucleoprotein C of Arabidopsis thaliana (Mouse-ear cress).